The sequence spans 651 residues: Probable potassium transport system protein Kup (651 aa).

12 consecutive transmembrane segments (helical) span residues 41–61 (LVLG…IYAF), 82–102 (VVSL…VLFV), 130–150 (LILG…VITP), 163–183 (IVAP…LVTL), 194–214 (VAIV…ASGL), 235–255 (FLTV…LAMT), 276–296 (WLWI…AFIL), 309–329 (MIPS…TVIA), 366–386 (IYIP…VLGF), 395–415 (AYGI…YIVM), 426–446 (ALPI…ANII), and 450–470 (EGGW…WTWV).

It belongs to the HAK/KUP transporter (TC 2.A.72) family.

The protein resides in the cell inner membrane. The catalysed reaction is K(+)(in) + H(+)(in) = K(+)(out) + H(+)(out). In terms of biological role, transport of potassium into the cell. Likely operates as a K(+):H(+) symporter. This Brucella melitensis biotype 1 (strain ATCC 23456 / CCUG 17765 / NCTC 10094 / 16M) protein is Probable potassium transport system protein Kup.